The primary structure comprises 469 residues: Acetyl-CoA decarbonylase/synthase complex subunit beta 1 (469 aa).

Residues cysteine 189, cysteine 192, cysteine 278, and cysteine 280 each coordinate [Ni-Fe-S] cluster.

It belongs to the CdhC family. In terms of assembly, monomer. The ACDS complex is made up of alpha, epsilon, beta, gamma and delta chains with a probable stoichiometry of (alpha(2)epsilon(2))(4)-beta(8)-(gamma(1)delta(1))(8) (Potential). Requires [Ni-Fe-S] cluster as cofactor.

It carries out the reaction Co(I)-[corrinoid Fe-S protein] + acetyl-CoA + H(+) = methyl-Co(III)-[corrinoid Fe-S protein] + CO + CoA. It participates in one-carbon metabolism; methanogenesis from acetate. Functionally, part of a complex that catalyzes the reversible cleavage of acetyl-CoA, allowing growth on acetate as sole source of carbon and energy. The alpha-epsilon complex generates CO from CO(2), while the beta subunit (this protein) combines the CO with CoA and a methyl group to form acetyl-CoA. The methyl group, which is incorporated into acetyl-CoA, is transferred to the beta subunit by a corrinoid iron-sulfur protein (the gamma-delta complex). This chain is Acetyl-CoA decarbonylase/synthase complex subunit beta 1 (cdhC1), found in Methanosarcina acetivorans (strain ATCC 35395 / DSM 2834 / JCM 12185 / C2A).